Here is a 648-residue protein sequence, read N- to C-terminus: Zinc finger protein 202 (648 aa).

A Glycyl lysine isopeptide (Lys-Gly) (interchain with G-Cter in SUMO2) cross-link involves residue Lys-22. The region spanning 46–127 is the SCAN box domain; the sequence is HQNFRRFRYQ…VTLVEGLQKQ (82 aa). Residues 146-221 are disordered; the sequence is SEETVHLGVE…PDLPAERSSG (76 aa). The segment covering 165 to 182 has biased composition (polar residues); that stretch reads PVQSSTPEQSPEETTQSP. The KRAB domain occupies 237 to 308; that stretch reads VTFKDVAVCF…DIQEPQETQE (72 aa). 2 consecutive C2H2-type zinc fingers follow at residues 397 to 419 and 425 to 447; these read HDCS…LRTH and YKCM…QKVH. Residues Lys-454 and Lys-460 each participate in a glycyl lysine isopeptide (Lys-Gly) (interchain with G-Cter in SUMO2) cross-link. The residue at position 466 (Ser-466) is a Phosphoserine. Residues 481 to 503 form a C2H2-type 3 zinc finger; it reads YRCDDCGKHFRWTSDLVRHQRTH. Glycyl lysine isopeptide (Lys-Gly) (interchain with G-Cter in SUMO2) cross-links involve residues Lys-507 and Lys-521. 5 C2H2-type zinc fingers span residues 509–531, 537–559, 565–587, 593–615, and 621–643; these read FFCT…QRIH, YLCG…RKTH, YLCS…LRGH, CRCN…QRTH, and FTCP…QRTH.

In terms of assembly, interacts with SDP1. Highly expressed in testis. Also expressed in breast carcinoma cell lines.

It is found in the nucleus. Its function is as follows. Transcriptional repressor that binds to elements found predominantly in genes that participate in lipid metabolism. Among its targets are structural components of lipoprotein particles (apolipoproteins AIV, CIII, and E), enzymes involved in lipid processing (lipoprotein lipase, lecithin cholesteryl ester transferase), transporters involved in lipid homeostasis (ABCA1, ABCG1), and several genes involved in processes related to energy metabolism and vascular disease. This is Zinc finger protein 202 (ZNF202) from Homo sapiens (Human).